The sequence spans 450 residues: Flavin-containing monooxygenase FMO GS-OX-like 3 (450 aa).

17-22 provides a ligand contact to FAD; that stretch reads GAGPAG. Residue 215 to 220 participates in NADP(+) binding; it reads GNSSSA.

Belongs to the FMO family. FAD is required as a cofactor.

Its function is as follows. Catalyzes the conversion of methylthioalkyl glucosinolates of any chain length into methylsulfinylalkyl glucosinolates. This Arabidopsis thaliana (Mouse-ear cress) protein is Flavin-containing monooxygenase FMO GS-OX-like 3.